A 262-amino-acid polypeptide reads, in one-letter code: 2-keto-4-pentenoate hydratase 2 (262 aa).

This sequence belongs to the hydratase/decarboxylase family. MhpD subfamily. A divalent metal cation serves as cofactor.

It catalyses the reaction (S)-4-hydroxy-2-oxopentanoate = (2Z)-2-hydroxypenta-2,4-dienoate + H2O. It participates in aromatic compound metabolism; 3-phenylpropanoate degradation. Functionally, catalyzes the conversion of 2-hydroxypentadienoic acid (enolic form of 2-oxopent-4-enoate) to 4-hydroxy-2-ketopentanoic acid. The protein is 2-keto-4-pentenoate hydratase 2 of Dechloromonas aromatica (strain RCB).